The chain runs to 454 residues: uncharacterized protein (454 aa).

Residues 364-405 (CSRPGCDAPAYHSEVHHVTPWTTTHRTDINDLTLACGPDNRL) form the HNH domain.

The protein belongs to the Rv1128c/1148c/1588c/1702c/1945/3466 family.

This is an uncharacterized protein from Mycobacterium tuberculosis (strain CDC 1551 / Oshkosh).